The chain runs to 367 residues: METKLLRTPLYELYDQAGAKTVDFGGWELPVSFSGIKKEHHAVRNAAGLFDVSHMGELLVEGPDALNNLQALVTNDLSKLQDNQAQYNAMCTESGGTVDDLIVYRRNENAYLLVLNAANIQSDIEWIRAHVSGQVTLTDISNETALLAVQGPKALAVLQTLTDEPLSEIRPFRFKENVMFAAIPVLASRTGYTGEDGFELYVKAGDAAELWRAILAAGEPFGLLPCGLGARDTLRFEARLPLYGQELTKDISPIEAGIGFAVKTDKQAAFIGQQALKKQKEQGPSRKLVGIEMVDRGIPRTGYRVFYQGQDVGFVTSGTQSPTLGKNVGLVLAKADAAAIDTELEVEVRGKRLRARVVKTPFYKRTK.

This sequence belongs to the GcvT family. As to quaternary structure, the glycine cleavage system is composed of four proteins: P, T, L and H.

The catalysed reaction is N(6)-[(R)-S(8)-aminomethyldihydrolipoyl]-L-lysyl-[protein] + (6S)-5,6,7,8-tetrahydrofolate = N(6)-[(R)-dihydrolipoyl]-L-lysyl-[protein] + (6R)-5,10-methylene-5,6,7,8-tetrahydrofolate + NH4(+). Its function is as follows. The glycine cleavage system catalyzes the degradation of glycine. The sequence is that of Aminomethyltransferase from Shouchella clausii (strain KSM-K16) (Alkalihalobacillus clausii).